The following is a 424-amino-acid chain: Histidine--tRNA ligase (424 aa).

This sequence belongs to the class-II aminoacyl-tRNA synthetase family. In terms of assembly, homodimer.

It localises to the cytoplasm. The enzyme catalyses tRNA(His) + L-histidine + ATP = L-histidyl-tRNA(His) + AMP + diphosphate + H(+). This is Histidine--tRNA ligase from Salmonella arizonae (strain ATCC BAA-731 / CDC346-86 / RSK2980).